We begin with the raw amino-acid sequence, 328 residues long: Versiconal hemiacetal acetate esterase (328 aa).

The Involved in the stabilization of the negatively charged intermediate by the formation of the oxyanion hole signature appears at 82–84 (HGG). Residues serine 156, aspartate 260, and histidine 290 contribute to the active site.

The protein belongs to the 'GDXG' lipolytic enzyme family.

It carries out the reaction (2S,3S)-versiconal hemiacetal acetate + H2O = (2S-3S)-versiconal hemiacetal + acetate + H(+). The catalysed reaction is (3S)-versiconol acetate + H2O = (S)-versiconol + acetate + H(+). Its pathway is mycotoxin biosynthesis. Functionally, versiconal hemiacetal acetate esterase; part of the fragmented gene cluster that mediates the biosynthesis of dothistromin (DOTH), a polyketide toxin very similar in structure to the aflatoxin precursor, versicolorin B. The first step of the pathway is the conversion of acetate to norsolorinic acid (NOR) and requires the fatty acid synthase subunits hexA and hexB, as well as the polyketide synthase pksA. PksA combines a hexanoyl starter unit and 7 malonyl-CoA extender units to synthesize the precursor NOR. The hexanoyl starter unit is provided to the acyl-carrier protein (ACP) domain by the fungal fatty acid synthase hexA/hexB. The second step is the conversion of NOR to averantin (AVN) and requires the norsolorinic acid ketoreductase nor1, which catalyzes the dehydration of norsolorinic acid to form (1'S)-averantin. The cytochrome P450 monooxygenase avnA then catalyzes the hydroxylation of AVN to 5'hydroxyaverantin (HAVN). The next step is performed by adhA that transforms HAVN to averufin (AVF). Averufin might then be converted to hydroxyversicolorone by cypX and avfA. Hydroxyversicolorone is further converted versiconal hemiacetal acetate (VHA) by moxY. VHA is then the substrate for the versiconal hemiacetal acetate esterase est1 to yield versiconal (VAL). Versicolorin B synthase vbsA then converts VAL to versicolorin B (VERB) by closing the bisfuran ring. Then, the activity of the versicolorin B desaturase verB leads to versicolorin A (VERA). DotB, a predicted chloroperoxidase, may perform epoxidation of the A-ring of VERA. Alternatively, a cytochrome P450, such as cypX or avnA could catalyze this step. It is also possible that another, uncharacterized, cytochrome P450 enzyme is responsible for this step. Opening of the epoxide could potentially be achieved by the epoxide hydrolase epoA. However, epoA seems not to be required for DOTH biosynthesis, but other epoxide hydrolases may have the ability to complement this hydrolysis. Alternatively, opening of the epoxide ring could be achieved non-enzymatically. The next step is the deoxygenation of ring A to yield the 5,8-dihydroxyanthraquinone which is most likely catalyzed by the NADPH dehydrogenase encoded by ver1. The last stages of DOTH biosynthesis are proposed to involve hydroxylation of the bisfuran. OrdB and norB might have oxidative roles here. An alternative possibility is that cytochrome P450 monoogenases such as avnA and cypX might perform these steps in addition to previously proposed steps. In Dothistroma septosporum (strain NZE10 / CBS 128990) (Red band needle blight fungus), this protein is Versiconal hemiacetal acetate esterase.